We begin with the raw amino-acid sequence, 241 residues long: Gamma-interferon-inducible lysosomal thiol reductase-like protein (241 aa).

The first 18 residues, 1-18, serve as a signal peptide directing secretion; that stretch reads MLFKSLLLLSVYAVTCYG. N-linked (GlcNAc...) asparagine glycosylation is found at asparagine 105 and asparagine 152. A helical membrane pass occupies residues 218 to 235; that stretch reads STGSAISSLGMIVTVVAV.

It belongs to the GILT family. In terms of tissue distribution, salivary gland (at protein level). Low-level expression in midgut (at protein level). Expressed in head and leg tissues. Ovary. Fat body. (Microbial infection) Detected with Plasmodium berghei sporozoites isolated from the saliva of infected Anopheles gambiae mosquitoes (at protein level).

It localises to the membrane. In terms of biological role, required for normal development of ovary and testis. (Microbial infection) Interacts with the surface of Plasmodium berghei sporozoites. Reduces P.berghei sporozoite cell traversal activity and transmission. Limits the motility of P.berghei sporozoites. Decreases the levels of host liver infection by P.berghei sporozoites. Does not affect P.berghei sporozoite viability. Indirectly promotes P.berghei survival in mosquitoes by influencing ovarian development and the subsequent production of 20-hydroxyecdysone and vitellogenin, which, in turn, modulates TEP1-dependent parasite killing. Promotes P.berghei infection in mosquitoes, most likely impacting the oocyst stage of parasite development. Its function is as follows. (Microbial infection) Promotes Plasmodium falciparum survival in mosquitoes. The chain is Gamma-interferon-inducible lysosomal thiol reductase-like protein from Anopheles gambiae (African malaria mosquito).